Reading from the N-terminus, the 449-residue chain is 3-phosphoshikimate 1-carboxyvinyltransferase (449 aa).

Residues 1–29 (MSHDSVPSPITARAGTPLRGRLRPPGDKS) are disordered. Residues K28, S29, and R33 each contribute to the 3-phosphoshikimate site. Position 28 (K28) interacts with phosphoenolpyruvate. Residues G101 and R129 each contribute to the phosphoenolpyruvate site. S175, Q177, D330, and K357 together coordinate 3-phosphoshikimate. Q177 is a binding site for phosphoenolpyruvate. D330 serves as the catalytic Proton acceptor. The phosphoenolpyruvate site is built by R361 and R405.

The protein belongs to the EPSP synthase family. Monomer.

It is found in the cytoplasm. The enzyme catalyses 3-phosphoshikimate + phosphoenolpyruvate = 5-O-(1-carboxyvinyl)-3-phosphoshikimate + phosphate. The protein operates within metabolic intermediate biosynthesis; chorismate biosynthesis; chorismate from D-erythrose 4-phosphate and phosphoenolpyruvate: step 6/7. Catalyzes the transfer of the enolpyruvyl moiety of phosphoenolpyruvate (PEP) to the 5-hydroxyl of shikimate-3-phosphate (S3P) to produce enolpyruvyl shikimate-3-phosphate and inorganic phosphate. The polypeptide is 3-phosphoshikimate 1-carboxyvinyltransferase (Methylobacterium sp. (strain 4-46)).